Consider the following 20-residue polypeptide: Maximin-Ht (20 aa).

Belongs to the bombinin family. In terms of tissue distribution, expressed by the skin glands.

The protein resides in the secreted. In terms of biological role, has antimicrobial activity. The sequence is that of Maximin-Ht from Bombina maxima (Giant fire-bellied toad).